The chain runs to 323 residues: tRNA U34 carboxymethyltransferase (323 aa).

Carboxy-S-adenosyl-L-methionine is bound by residues Lys-91, Trp-105, Lys-110, Gly-130, 152 to 154, 181 to 182, Met-196, Tyr-200, and Arg-315; these read DPT and IE.

This sequence belongs to the class I-like SAM-binding methyltransferase superfamily. CmoB family. Homotetramer.

It catalyses the reaction carboxy-S-adenosyl-L-methionine + 5-hydroxyuridine(34) in tRNA = 5-carboxymethoxyuridine(34) in tRNA + S-adenosyl-L-homocysteine + H(+). Functionally, catalyzes carboxymethyl transfer from carboxy-S-adenosyl-L-methionine (Cx-SAM) to 5-hydroxyuridine (ho5U) to form 5-carboxymethoxyuridine (cmo5U) at position 34 in tRNAs. This Escherichia coli O7:K1 (strain IAI39 / ExPEC) protein is tRNA U34 carboxymethyltransferase.